The following is a 199-amino-acid chain: MSRYVGPVFKRSRRFGFSILETGKEFVKGKQRQYAPGQHGQRRGKLSDFGIHQLEKQKVRFMYGINERQFRNTFAIANKAKGVTGTAFLQLLESRLDNIVYRMGFAQTRRQARQLVNHGHFLLNGKKADIPSQRINVGDTIELRAKSQNVPTILASIETRVVAPWIEKDKFKGKLIRVPERKELNQEINEALIVEFYNK.

Positions 94 to 157 constitute an S4 RNA-binding domain; sequence SRLDNIVYRM…QNVPTILASI (64 aa).

Belongs to the universal ribosomal protein uS4 family. In terms of assembly, part of the 30S ribosomal subunit. Contacts protein S5. The interaction surface between S4 and S5 is involved in control of translational fidelity.

Its function is as follows. One of the primary rRNA binding proteins, it binds directly to 16S rRNA where it nucleates assembly of the body of the 30S subunit. With S5 and S12 plays an important role in translational accuracy. The protein is Small ribosomal subunit protein uS4 of Mycoplasma mobile (strain ATCC 43663 / 163K / NCTC 11711) (Mesomycoplasma mobile).